Consider the following 176-residue polypeptide: RNA pyrophosphohydrolase (176 aa).

Residues 6–149 (GYRPNVGIVI…KRDVYRRVMK (144 aa)) enclose the Nudix hydrolase domain. Positions 38-59 (GGINPGESPEQAMYRELFEEVG) match the Nudix box motif.

It belongs to the Nudix hydrolase family. RppH subfamily. The cofactor is a divalent metal cation.

Accelerates the degradation of transcripts by removing pyrophosphate from the 5'-end of triphosphorylated RNA, leading to a more labile monophosphorylated state that can stimulate subsequent ribonuclease cleavage. This Proteus mirabilis (strain HI4320) protein is RNA pyrophosphohydrolase.